Consider the following 494-residue polypeptide: O-acetyltransferase ptmV (494 aa).

The tract at residues 181-203 (ESQQDSREKLRHSGGPPDPRFDH) is disordered.

Belongs to the fumigaclavine B O-acetyltransferase family. As to quaternary structure, monomer.

It participates in secondary metabolite biosynthesis. In terms of biological role, O-acetyltransferase; part of the gene cluster that mediates the biosynthesis of the indole diterpenes penitrems. The geranylgeranyl diphosphate (GGPP) synthase ptmG catalyzes the first step in penitrem biosynthesis via conversion of farnesyl pyrophosphate and isopentyl pyrophosphate into geranylgeranyl pyrophosphate (GGPP). Condensation of indole-3-glycerol phosphate with GGPP by the prenyl transferase ptmC then forms 3-geranylgeranylindole (3-GGI). Epoxidation by the FAD-dependent monooxygenase ptmM leads to a epoxidized-GGI that is substrate of the terpene cyclase ptmB for cyclization to yield paspaline. Paspaline is subsequently converted to 13-desoxypaxilline by the cytochrome P450 monooxygenase ptmP, the latter being then converted to paxilline by the cytochrome P450 monooxygenase ptmQ. Paxilline is converted to beta-paxitriol via C-10 ketoreduction by the short-chain dehydrogenase ptmH which can be monoprenylated at the C-20 by the indole diterpene prenyltransferase ptmD. A two-step elimination (acetylation and elimination) process performed by the O-acetyltransferase ptmV and ptmI leads to the production of the prenylated form of penijanthine. The FAD-linked oxidoreductase ptmO then converts the prenylated form of penijanthine into PC-M5 which is in turn transformed into PC-M4 by the aromatic dimethylallyltransferase ptmE. Five sequential oxidative transformations performed by the cytochrome P450 monooxygenases ptmK, ptmU, ptmL, ptmN and ptmJ yield the various penitrem compounds. PtmK, ptmU and ptmM are involved in the formation of the key bicyclic ring of penitrem C via the formation of the intermediates secopenitrem D and penitrem D. PtmL catalyzes the epoxidation of penitrem D and C to yield penitrem B and F, respectively. PtmJ catalyzes the last benzylic hydroxylation to convert penitrem B to prenitrem E and penitrem F to penitrem A. The chain is O-acetyltransferase ptmV from Penicillium ochrochloron.